A 919-amino-acid polypeptide reads, in one-letter code: Tight junction protein ZO-3 (919 aa).

The 83-residue stretch at 11-93 (TATLSKDPRR…MANITVKRPR (83 aa)) folds into the PDZ 1 domain. Positions 92–173 (PRRIHLPATK…SPGGGSEANG (82 aa)) are disordered. S112 carries the post-translational modification Phosphoserine. Basic and acidic residues predominate over residues 117–131 (GPQRVEEVDQGRGYD). S136 carries the phosphoserine modification. Basic residues predominate over residues 147 to 163 (RRPRPGRRGRAGSHGRR). 4 positions are modified to phosphoserine: S164, S169, S203, and S319. The 78-residue stretch at 195 to 272 (SVLVKRRDSE…KLSLLVLRDR (78 aa)) folds into the PDZ 2 domain. A disordered region spans residues 279–377 (IPPAVSDSDS…SSQSMEDRGY (99 aa)). T325 carries the post-translational modification Phosphothreonine. The residue at position 327 (S327) is a Phosphoserine. Over residues 332–360 (PRLRRESSVDSRTISEPDEQRSELPRESS) the composition is skewed to basic and acidic residues. At S371 the chain carries Phosphoserine. Residues 380–446 (DTRVVRFLKG…LTREEAVQFL (67 aa)) enclose the PDZ 3 domain. An SH3 domain is found at 475-549 (GDSFYIRTHF…PNQSRAEQLA (75 aa)). Positions 580 to 761 (LRRGAKKTTQ…WYQELKAIIR (182 aa)) constitute a Guanylate kinase-like domain. S591 is modified (phosphoserine). The segment covering 791-801 (ADSSADLSCDS) has biased composition (low complexity). 2 disordered regions span residues 791–886 (ADSS…DSMR) and 899–919 (RVHD…ATDL). Gly residues predominate over residues 812–828 (EGGAYTDGEGYTDGEGG). 3 positions are modified to phosphoserine: S856, S905, and S906.

This sequence belongs to the MAGUK family. Interacts with occludin OCLN, claudins and TPJ1. Interacts with PATJ. Interacts with UBN1. Interacts with FASLG. Interacts with CCND1. Post-translationally, phosphorylated.

The protein resides in the cell membrane. Its subcellular location is the cell junction. It is found in the tight junction. It localises to the nucleus. Its function is as follows. TJP1, TJP2, and TJP3 are closely related scaffolding proteins that link tight junction (TJ) transmembrane proteins such as claudins, junctional adhesion molecules, and occludin to the actin cytoskeleton. The tight junction acts to limit movement of substances through the paracellular space and as a boundary between the compositionally distinct apical and basolateral plasma membrane domains of epithelial and endothelial cells. Binds and recruits PATJ to tight junctions where it connects and stabilizes apical and lateral components of tight junctions. Promotes cell-cycle progression through the sequestration of cyclin D1 (CCND1) at tight junctions during mitosis which prevents CCND1 degradation during M-phase and enables S-phase transition. With TJP1 and TJP2, participates in the junctional retention and stability of the transcription factor DBPA, but is not involved in its shuttling to the nucleus. Contrary to TJP2, TJP3 is dispensable for individual viability, embryonic development, epithelial differentiation, and the establishment of TJs, at least in the laboratory environment. This Homo sapiens (Human) protein is Tight junction protein ZO-3 (TJP3).